Reading from the N-terminus, the 215-residue chain is Adenylate kinase (215 aa).

Residue 10-15 coordinates ATP; sequence GAGKGT. Positions 30-59 are NMP; that stretch reads STGDMLRAAIKAGTPLGLEAKKIIDEGGLV. AMP is bound by residues threonine 31, arginine 36, 57–59, 85–88, and glutamine 92; these read GLV and GFPR. The interval 122 to 159 is LID; that stretch reads GRRVHLASGRTYHVTYNPPKVEGKDDVTGEDLIQRDDD. ATP-binding positions include arginine 123 and 132 to 133; that span reads TY. Residues arginine 156 and arginine 167 each contribute to the AMP site. Glutamine 200 is an ATP binding site.

The protein belongs to the adenylate kinase family. Monomer.

The protein localises to the cytoplasm. The catalysed reaction is AMP + ATP = 2 ADP. It participates in purine metabolism; AMP biosynthesis via salvage pathway; AMP from ADP: step 1/1. In terms of biological role, catalyzes the reversible transfer of the terminal phosphate group between ATP and AMP. Plays an important role in cellular energy homeostasis and in adenine nucleotide metabolism. This chain is Adenylate kinase, found in Neisseria meningitidis serogroup B (strain ATCC BAA-335 / MC58).